A 468-amino-acid polypeptide reads, in one-letter code: GTPase Der (468 aa).

2 EngA-type G domains span residues 3–169 (PVMA…SPPD) and 199–372 (IRLA…KAAT). GTP contacts are provided by residues 9 to 16 (GRANVGKS), 56 to 60 (DTGGF), 119 to 122 (NKAE), 205 to 212 (GRPNVGKS), 252 to 256 (DTAGL), and 317 to 320 (NKWD). The KH-like domain occupies 373–457 (CKMSTPVLTR…PLRIELKTSH (85 aa)).

The protein belongs to the TRAFAC class TrmE-Era-EngA-EngB-Septin-like GTPase superfamily. EngA (Der) GTPase family. As to quaternary structure, associates with the 50S ribosomal subunit.

In terms of biological role, GTPase that plays an essential role in the late steps of ribosome biogenesis. In Verminephrobacter eiseniae (strain EF01-2), this protein is GTPase Der.